A 30-amino-acid chain; its full sequence is Snaclec coagulation factor IX/factor X-binding protein subunit B (30 aa).

The cysteines at positions 2 and 13 are disulfide-linked. The region spanning 9–30 (YEGHCYRVFTEPQNWADAEKFC) is the C-type lectin domain.

This sequence belongs to the snaclec family. As to quaternary structure, heterodimer of subunits A and B; disulfide-linked. Post-translationally, glycosylated. As to expression, expressed by the venom gland.

The protein resides in the secreted. In terms of biological role, anticoagulant protein which binds to the gamma-carboxyglutamic acid-domain regions of factors IX (F9) and factor X (F10) in the presence of calcium with a 1 to 1 stoichiometry. This Bothrops jararaca (Jararaca) protein is Snaclec coagulation factor IX/factor X-binding protein subunit B.